The following is a 471-amino-acid chain: Putative multidrug resistance protein MdtD (471 aa).

Residues 1 to 11 (MTDLPDSTRWQ) are Periplasmic-facing. The helical transmembrane segment at 12 to 32 (LWIVAFGFFMQSLDTTIVNTA) threads the bilayer. Residues 33–48 (LPSMAQSLGESPLHMH) lie on the Cytoplasmic side of the membrane. A helical transmembrane segment spans residues 49–69 (MVIVSYVLTVAVMLPASGWLA). At 70–76 (DKVGVRN) the chain is on the periplasmic side. A helical membrane pass occupies residues 77 to 97 (IFFTAIVLFTLGSLFCALSGT). Residues 98–101 (LNEL) are Cytoplasmic-facing. A helical membrane pass occupies residues 102 to 124 (LLARALQGVGGAMMVPVGRLTVM). The Periplasmic segment spans residues 125–137 (KIVPREQYMAAMT). A helical membrane pass occupies residues 138–158 (FVTLPGQVGPLLGPALGGLLV). At 159 to 164 (EYASWH) the chain is on the cytoplasmic side. The chain crosses the membrane as a helical span at residues 165 to 185 (WIFLINIPVGIIGAIATLLLM). At 186 to 196 (PNYTMQTRRFD) the chain is on the periplasmic side. Residues 197–217 (LSGFLLLAVGMAVLTLALDGS) traverse the membrane as a helical segment. The Cytoplasmic segment spans residues 218-224 (KGTGLSP). A helical transmembrane segment spans residues 225 to 245 (LTIAGLVAVGVVALVLYLLHA). At 246–262 (RNNNRALFSLKLFRTRT) the chain is on the periplasmic side. The helical transmembrane segment at 263–283 (FSLGLAGSFAGRIGSGMLPFM) threads the bilayer. Residues 284 to 285 (TP) are Cytoplasmic-facing. Residues 286–306 (VFLQIGLGFSPFHAGLMMIPM) traverse the membrane as a helical segment. The Periplasmic segment spans residues 307 to 341 (VLGSMGMKRIVVQVVNRFGYRRVLVATTLGLSLVT). The helical transmembrane segment at 342 to 362 (LLFMTTALLGWYYVLPFVLFL) threads the bilayer. The Cytoplasmic portion of the chain corresponds to 363 to 395 (QGMVNSTRFSSMNTLTLKDLPDNLASSGNSLLS). A helical transmembrane segment spans residues 396–416 (MIMQLSMSIGVTIAGLLLGLF). The Periplasmic portion of the chain corresponds to 417 to 430 (GSQHVSVDSGTTQT). A helical transmembrane segment spans residues 431 to 451 (VFMYTWLSMALIIALPAFIFA). At 452 to 471 (RVPNDTHQNVAISRRKRSAQ) the chain is on the cytoplasmic side.

Belongs to the major facilitator superfamily. TCR/Tet family.

The protein localises to the cell inner membrane. This chain is Putative multidrug resistance protein MdtD, found in Escherichia coli (strain K12 / MC4100 / BW2952).